Consider the following 299-residue polypeptide: CRISPR system Cms protein Csm4 (299 aa).

It belongs to the CRISPR-associated Csm4 family. In terms of assembly, part of the Csm effector complex that includes at least Cas10(1), Csm2(3), Csm3(5), Csm4(1), Csm5(1) and mature crRNA. The Csm complex is elongated and slightly twisted with a maximal length of 215 Angstroms and a diameter of 75-80 Angstroms. It has been modeled to have a central protein filamant of Csm3 subunits along which the dsRNA helix of paired crRNA and target RNA binds. The filament is capped at one end by Cas10 and Csm4 and at the other end by Csm5; ssDNA is thought to bind to the N-terminal HD domain of Cas10. Csm with a precursor crRNA does not include Csm5, while Cas6, the enzyme probably involved in pre-crRNA processing, is found associated with a subset of the Csm complex.

In terms of biological role, CRISPR (clustered regularly interspaced short palindromic repeat) is an adaptive immune system that provides protection against mobile genetic elements (viruses, transposable elements and conjugative plasmids). CRISPR clusters contain spacers, sequences complementary to antecedent mobile elements, and target invading nucleic acids. CRISPR clusters are transcribed and processed into CRISPR RNA (crRNA). The type III-A Csm effector complex binds crRNA and acts as a crRNA-guided RNase, DNase and cyclic oligoadenylate synthase; binding of target RNA cognate to the crRNA is required for all activities. In a heterologous host this Csm effector complex restricts ssRNA phage MS2, suggesting it may target RNA viruses in vivo. Csm functions as a non-specific ssDNase. Base-pairing between crRNA and target RNA to form a ternary Csm complex activates a ssDNase activity; target RNA cleavage suppresses the ssDNase, a temporal control that prevents uncontrolled DNA degradation. Viral RNA transcripts probably tether the Csm complex to the viral genome, recruiting Cas10 ssDNA activity which is able to degrade DNA in the transcription bubble, spatially controlling the DNase activity. Functionally, the subunit probably binds to the 5' handle of the crRNA, helping in discrimination between self- and non-self. In Streptococcus thermophilus, this protein is CRISPR system Cms protein Csm4.